The sequence spans 107 residues: Anaphase-promoting complex subunit 14 (107 aa).

As to quaternary structure, the APC/C is composed of at least 13 subunits: apc1, apc2, nuc2, apc4, apc5, cut9, apc8, apc10, apc11, hcn1, apc13, apc14 and apc15.

The protein resides in the ascus epiplasm. Component of the anaphase promoting complex/cyclosome (APC/C), a cell cycle-regulated E3 ubiquitin-protein ligase complex that controls progression through mitosis and the G1 phase of the cell cycle. The APC/C is thought to confer substrate specificity and, in the presence of ubiquitin-conjugating E2 enzymes, it catalyzes the formation of protein-ubiquitin conjugates that are subsequently degraded by the 26S proteasome. Appears to play a role in spore wall formation. This Schizosaccharomyces pombe (strain 972 / ATCC 24843) (Fission yeast) protein is Anaphase-promoting complex subunit 14.